We begin with the raw amino-acid sequence, 693 residues long: Polyribonucleotide nucleotidyltransferase (693 aa).

Residues D486 and D492 each contribute to the Mg(2+) site. The KH domain occupies 553–612 (PRIHTIKINPEKIKDVIGKGGSVIRMLTEETGTTIEIEDDGTVKISAVMQEKAKCAIQRI). The S1 motif domain maps to 622-690 (GSVYTGKVTR…RQGRLRLSIK (69 aa)).

The protein belongs to the polyribonucleotide nucleotidyltransferase family. Component of the RNA degradosome, which is a multiprotein complex involved in RNA processing and mRNA degradation. Mg(2+) serves as cofactor.

Its subcellular location is the cytoplasm. It carries out the reaction RNA(n+1) + phosphate = RNA(n) + a ribonucleoside 5'-diphosphate. Its function is as follows. Involved in mRNA degradation. Catalyzes the phosphorolysis of single-stranded polyribonucleotides processively in the 3'- to 5'-direction. This chain is Polyribonucleotide nucleotidyltransferase, found in Buchnera aphidicola subsp. Baizongia pistaciae (strain Bp).